A 180-amino-acid polypeptide reads, in one-letter code: Ubiquitin-conjugating enzyme E2 20 (180 aa).

The segment at 1–33 (MAAVNGYQGNTPADPPASNGSKQPAAPTKTVDS) is disordered. One can recognise a UBC core domain in the interval 35 to 180 (SVLKRLQSEL…VEKLYKPPSA (146 aa)). Catalysis depends on cysteine 119, which acts as the Glycyl thioester intermediate.

The protein belongs to the ubiquitin-conjugating enzyme family. As to expression, expressed in all tissues with cell division activities and in mature leaves.

The catalysed reaction is S-ubiquitinyl-[E1 ubiquitin-activating enzyme]-L-cysteine + [E2 ubiquitin-conjugating enzyme]-L-cysteine = [E1 ubiquitin-activating enzyme]-L-cysteine + S-ubiquitinyl-[E2 ubiquitin-conjugating enzyme]-L-cysteine.. It functions in the pathway protein modification; protein ubiquitination. Accepts the ubiquitin from the E1 complex and catalyzes its covalent attachment to other proteins. This chain is Ubiquitin-conjugating enzyme E2 20 (UBC20), found in Arabidopsis thaliana (Mouse-ear cress).